The following is a 666-amino-acid chain: Hybrid PKS-NRPS synthetase pytA (666 aa).

Residues 1 to 340 (MDPQQRLLLE…GTNAHAILEE (340 aa)) form the Ketosynthase family 3 (KS3) domain. Residues Cys-87, His-222, and His-260 each act as for beta-ketoacyl synthase activity in the active site. The interval 455–665 (VFTGQGAQWF…VFVHSLVIKR (211 aa)) is malonyl-CoA:ACP transacylase (MAT) domain. Residue Ser-548 is the For malonyltransferase activity of the active site.

In the C-terminal section; belongs to the NRP synthetase family.

Its pathway is secondary metabolite biosynthesis. Functionally, hybrid PKS-NRPS synthetase; part of the gene cluster that mediates the biosynthesis of pyranterreones, a family of antioxidative compounds. The first step of pyranonigrins biosynthesis is performed by the hybrid PKS-NRPS synthetase pytA that condenses 4 malonyl-CoA units ato the acetyl starter unit by the modular PKS of pytA. The acyl chain is then connected to an L-serine through the amide bond by the modular NRPS of pytA. A tetramic acid is formed and released from the PKS-NRPS pytA to give pyranterreone 5 with the help of the thioesterase pytI. Pyranterreone 5 could be methylated by pytC to afford pyranterreone 6. Both pyranterreones 5 and 6 are subsequently oxidized by the FAD-linked oxidoreductase pytB and the cytochrome P450 monooxygenase pytD to form the fused gamma-pyrone core, resulting in pyranterreones 7 and 11, respectively. The hydroxy group at C-8 of pyranterreones 7 and 11 are dehydrated by the aspartyl protease pytH to form a delta-7 double bond to give pyranterreones 3 and 1, 2 accordingly. The exo-methylene of pyranterreone 3 could be reduced into a pendant methyl by reductase pytE to provide pyranterreone 4, also known as cordylactam. Pyranterreone 4 can be reconverted to pyranterreone 3 through pytB-catalyzed dehydrogenation or further oxidized to pyranterreones 9 and 10. In Aspergillus terreus (strain NIH 2624 / FGSC A1156), this protein is Hybrid PKS-NRPS synthetase pytA.